The sequence spans 110 residues: Large ribosomal subunit protein uL22 (110 aa).

This sequence belongs to the universal ribosomal protein uL22 family. In terms of assembly, part of the 50S ribosomal subunit.

This protein binds specifically to 23S rRNA; its binding is stimulated by other ribosomal proteins, e.g. L4, L17, and L20. It is important during the early stages of 50S assembly. It makes multiple contacts with different domains of the 23S rRNA in the assembled 50S subunit and ribosome. Functionally, the globular domain of the protein is located near the polypeptide exit tunnel on the outside of the subunit, while an extended beta-hairpin is found that lines the wall of the exit tunnel in the center of the 70S ribosome. The protein is Large ribosomal subunit protein uL22 of Shewanella amazonensis (strain ATCC BAA-1098 / SB2B).